We begin with the raw amino-acid sequence, 391 residues long: Chorismate synthase (391 aa).

Arginine 48 serves as a coordination point for NADP(+). FMN is bound by residues 126 to 128 (RAS), glycine 286, 301 to 305 (KPTSS), and arginine 328.

It belongs to the chorismate synthase family. It depends on FMNH2 as a cofactor.

The enzyme catalyses 5-O-(1-carboxyvinyl)-3-phosphoshikimate = chorismate + phosphate. It participates in metabolic intermediate biosynthesis; chorismate biosynthesis; chorismate from D-erythrose 4-phosphate and phosphoenolpyruvate: step 7/7. In terms of biological role, catalyzes the anti-1,4-elimination of the C-3 phosphate and the C-6 proR hydrogen from 5-enolpyruvylshikimate-3-phosphate (EPSP) to yield chorismate, which is the branch point compound that serves as the starting substrate for the three terminal pathways of aromatic amino acid biosynthesis. This reaction introduces a second double bond into the aromatic ring system. This chain is Chorismate synthase, found in Saccharolobus solfataricus (strain ATCC 35092 / DSM 1617 / JCM 11322 / P2) (Sulfolobus solfataricus).